The following is a 207-amino-acid chain: Superoxide dismutase [Fe] (207 aa).

Fe cation contacts are provided by His28, His76, Asp160, and His164.

Belongs to the iron/manganese superoxide dismutase family. As to quaternary structure, homotetramer. It depends on Fe cation as a cofactor.

It is found in the secreted. The enzyme catalyses 2 superoxide + 2 H(+) = H2O2 + O2. Its function is as follows. Destroys superoxide anion radicals which are normally produced within the cells and which are toxic to biological systems. The polypeptide is Superoxide dismutase [Fe] (sodB) (Mycobacterium tuberculosis (strain CDC 1551 / Oshkosh)).